The following is a 1391-amino-acid chain: DNA-directed RNA polymerase subunit beta (1391 aa).

It belongs to the RNA polymerase beta chain family. In terms of assembly, the RNAP catalytic core consists of 2 alpha, 1 beta, 1 beta' and 1 omega subunit. When a sigma factor is associated with the core the holoenzyme is formed, which can initiate transcription.

The catalysed reaction is RNA(n) + a ribonucleoside 5'-triphosphate = RNA(n+1) + diphosphate. In terms of biological role, DNA-dependent RNA polymerase catalyzes the transcription of DNA into RNA using the four ribonucleoside triphosphates as substrates. This chain is DNA-directed RNA polymerase subunit beta, found in Mycoplasma pneumoniae (strain ATCC 29342 / M129 / Subtype 1) (Mycoplasmoides pneumoniae).